The sequence spans 233 residues: 2-C-methyl-D-erythritol 4-phosphate cytidylyltransferase (233 aa).

This sequence belongs to the IspD/TarI cytidylyltransferase family. IspD subfamily.

The enzyme catalyses 2-C-methyl-D-erythritol 4-phosphate + CTP + H(+) = 4-CDP-2-C-methyl-D-erythritol + diphosphate. The protein operates within isoprenoid biosynthesis; isopentenyl diphosphate biosynthesis via DXP pathway; isopentenyl diphosphate from 1-deoxy-D-xylulose 5-phosphate: step 2/6. Catalyzes the formation of 4-diphosphocytidyl-2-C-methyl-D-erythritol from CTP and 2-C-methyl-D-erythritol 4-phosphate (MEP). The polypeptide is 2-C-methyl-D-erythritol 4-phosphate cytidylyltransferase (Vibrio atlanticus (strain LGP32) (Vibrio splendidus (strain Mel32))).